A 541-amino-acid chain; its full sequence is Kinesin light chain 1 (541 aa).

The stretch at 27–156 (KTKQVIQGLE…HLEFMNQLKK (130 aa)) forms a coiled coil. Over residues 156-176 (KYDDDISPSEDKDSDSSKEPL) the composition is skewed to basic and acidic residues. The tract at residues 156–201 (KYDDDISPSEDKDSDSSKEPLDDLFPNDEDEPGQGIQHSDSSAAAA) is disordered. Ser-162 carries the post-translational modification Phosphoserine. TPR repeat units follow at residues 211 to 244 (LRTLHNLVIQYASQGRYEVAVPSCKQALEDLEKT), 253 to 286 (ATMLNILALVYRDQNKYKDAANLLNDALAIREKT), 295 to 328 (AATLNNLAVLYGKRGKYKEAEPLCKRALEIREKV), 337 to 370 (AKQLNNLALLCQNQGKYEEVEYYYQRALGIYQTK), and 380 to 413 (AKTKNNLASCYLKQGKFKQAETLYKEILTRAHEA). Tyr-448 is modified (phosphotyrosine). Phosphoserine is present on Ser-459. The stretch at 463–496 (TTTLKNLGALYRRQGKFEAAETLEEAAMRSRKQG) is one TPR 6 repeat. Residues 493–541 (RKQGLDNVHKQRVAEVLNDPESMEKRRSRESLNMDVVKYESGPDGGEEA) are disordered. Composition is skewed to basic and acidic residues over residues 495–505 (QGLDNVHKQRV) and 514–524 (SMEKRRSRESL). A phosphoserine; by AMPK mark is found at Ser-520 and Ser-523.

This sequence belongs to the kinesin light chain family. Oligomeric complex composed of two heavy chains and two light chains. Interacts with SPAG9. Interacts with ATCAY; may link mitochondria to KLC1 and regulate mitochondria localization into neuron projections. Interacts (via TPR repeats) with TOR1A; the interaction associates TOR1A with the kinesin oligomeric complex. Interacts with BORCS5. Interacts with MAPK8IP3/JIP3 and NTRK2/TRKB; interaction with NTRK2/TRKB is mediated by MAPK8IP3/JIP3. Interacts with CLSTN1; phosphorylation at Ser-459 inhibits interaction with CLSTN1. Phosphorylation at Ser-459 by ERK inhibits interaction with CLSTN1 and localization to cytoplasmic vesicles.

It is found in the cell projection. The protein resides in the growth cone. The protein localises to the cytoplasmic vesicle. It localises to the cytoplasm. Its subcellular location is the cytoskeleton. Its function is as follows. Kinesin is a microtubule-associated force-producing protein that may play a role in organelle transport. The light chain may function in coupling of cargo to the heavy chain or in the modulation of its ATPase activity. This Mus musculus (Mouse) protein is Kinesin light chain 1 (Klc1).